We begin with the raw amino-acid sequence, 829 residues long: Leucine--tRNA ligase (829 aa).

Positions 40 to 50 match the 'HIGH' region motif; the sequence is PYPSGNIHMGH. The 'KMSKS' region motif lies at 581–585; it reads KMSKS. Lysine 584 serves as a coordination point for ATP.

This sequence belongs to the class-I aminoacyl-tRNA synthetase family.

It is found in the cytoplasm. It carries out the reaction tRNA(Leu) + L-leucine + ATP = L-leucyl-tRNA(Leu) + AMP + diphosphate. This Oleidesulfovibrio alaskensis (strain ATCC BAA-1058 / DSM 17464 / G20) (Desulfovibrio alaskensis) protein is Leucine--tRNA ligase.